A 258-amino-acid chain; its full sequence is 3-deoxy-manno-octulosonate cytidylyltransferase (258 aa).

The protein belongs to the KdsB family.

Its subcellular location is the cytoplasm. It carries out the reaction 3-deoxy-alpha-D-manno-oct-2-ulosonate + CTP = CMP-3-deoxy-beta-D-manno-octulosonate + diphosphate. Its pathway is nucleotide-sugar biosynthesis; CMP-3-deoxy-D-manno-octulosonate biosynthesis; CMP-3-deoxy-D-manno-octulosonate from 3-deoxy-D-manno-octulosonate and CTP: step 1/1. It functions in the pathway bacterial outer membrane biogenesis; lipopolysaccharide biosynthesis. Functionally, activates KDO (a required 8-carbon sugar) for incorporation into bacterial lipopolysaccharide in Gram-negative bacteria. This Blochmanniella floridana protein is 3-deoxy-manno-octulosonate cytidylyltransferase.